The sequence spans 249 residues: MRILIANDDGVTAPGIAALYDALADHADCVVIAPDQDKSGASSSLTLDRPLHPQRLDNGFISLNGTPTDCVHLGLNGLLEELPDMVVSGINLGANLGDDVLYSGTVAAAIEGRFLKGPAFAFSLVSRLTDNLPTAMHFARLLVAAHERLAVPPRTVLNVNVPNLPLERVRGIQLTRLGHRARAAAPVKVVNPRGKEGYWISAAGDAEDGGPGTDFHAVMQGYVSITPLQLDRTFHEAFGGLDEWLGGLK.

A divalent metal cation-binding residues include Asp-8, Asp-9, Ser-39, and Asn-91.

It belongs to the SurE nucleotidase family. Requires a divalent metal cation as cofactor.

It is found in the cytoplasm. The enzyme catalyses a ribonucleoside 5'-phosphate + H2O = a ribonucleoside + phosphate. Nucleotidase that shows phosphatase activity on nucleoside 5'-monophosphates. The protein is 5'-nucleotidase SurE of Pseudomonas paraeruginosa (strain DSM 24068 / PA7) (Pseudomonas aeruginosa (strain PA7)).